Reading from the N-terminus, the 82-residue chain is Putative membrane protein insertion efficiency factor (82 aa).

This sequence belongs to the UPF0161 family.

It localises to the cell membrane. In terms of biological role, could be involved in insertion of integral membrane proteins into the membrane. This chain is Putative membrane protein insertion efficiency factor, found in Streptococcus uberis (strain ATCC BAA-854 / 0140J).